Here is a 355-residue protein sequence, read N- to C-terminus: Probable butyrate kinase (355 aa).

The protein belongs to the acetokinase family.

It localises to the cytoplasm. The enzyme catalyses butanoate + ATP = butanoyl phosphate + ADP. This Listeria monocytogenes serotype 4a (strain HCC23) protein is Probable butyrate kinase.